The sequence spans 220 residues: Large ribosomal subunit protein uL10c (220 aa).

Residues 1–41 constitute a chloroplast transit peptide; it reads MEVALLSFSSSLSPLCHQRISTLTPKTSNSPNYPRLPVIRS.

Belongs to the universal ribosomal protein uL10 family. In terms of assembly, part of the 50S ribosomal subunit.

The protein localises to the plastid. The protein resides in the chloroplast. Functionally, this protein binds directly to 23S ribosomal RNA. The protein is Large ribosomal subunit protein uL10c (RPL10) of Arabidopsis thaliana (Mouse-ear cress).